Consider the following 175-residue polypeptide: MMTYIVFILSTVFVVSFVSFSSKPSPIYGGFGLIVAGGTGCGIVLNFGGSFLGLMVFLIYLGGMLVVFGYTTAMATEPYPEAWTSNKAVLAMFITGVLAELLTACYILKEDEVEVVFKFNGAGDWVIYDTGDSGFFSEEAMGIAALYSYGTWLVVVTGWSLLIGVLVIMEVTRGN.

5 helical membrane passes run 1 to 21, 25 to 45, 47 to 67, 88 to 108, and 149 to 169; these read MMTYIVFILSTVFVVSFVSFS, SPIYGGFGLIVAGGTGCGIVL, FGGSFLGLMVFLIYLGGMLVV, AVLAMFITGVLAELLTACYIL, and YGTWLVVVTGWSLLIGVLVIM.

It belongs to the complex I subunit 6 family. As to quaternary structure, core subunit of respiratory chain NADH dehydrogenase (Complex I) which is composed of 45 different subunits.

It localises to the mitochondrion inner membrane. The enzyme catalyses a ubiquinone + NADH + 5 H(+)(in) = a ubiquinol + NAD(+) + 4 H(+)(out). Its function is as follows. Core subunit of the mitochondrial membrane respiratory chain NADH dehydrogenase (Complex I) which catalyzes electron transfer from NADH through the respiratory chain, using ubiquinone as an electron acceptor. Essential for the catalytic activity and assembly of complex I. The sequence is that of NADH-ubiquinone oxidoreductase chain 6 (MT-ND6) from Felis catus (Cat).